We begin with the raw amino-acid sequence, 510 residues long: NAD(P)H-quinone oxidoreductase subunit 2 B, chloroplastic (510 aa).

13 helical membrane passes run 24-44, 57-77, 99-119, 124-144, 150-170, 183-203, 227-247, 295-315, 323-343, 347-367, 395-415, 418-438, and 484-504; these read LLLF…GLIL, IPWL…ALLF, IFQF…VEYI, MAIT…MFLC, ITIF…SGYT, YLLM…WLYG, PGIS…LSPA, WHLL…LIAI, MLAY…IVGD, GYAS…GTFA, ALSS…AGFF, LHLF…IGLL, and MIVC…IIAI.

Belongs to the complex I subunit 2 family. NDH is composed of at least 16 different subunits, 5 of which are encoded in the nucleus.

The protein resides in the plastid. The protein localises to the chloroplast thylakoid membrane. The catalysed reaction is a plastoquinone + NADH + (n+1) H(+)(in) = a plastoquinol + NAD(+) + n H(+)(out). It catalyses the reaction a plastoquinone + NADPH + (n+1) H(+)(in) = a plastoquinol + NADP(+) + n H(+)(out). In terms of biological role, NDH shuttles electrons from NAD(P)H:plastoquinone, via FMN and iron-sulfur (Fe-S) centers, to quinones in the photosynthetic chain and possibly in a chloroplast respiratory chain. The immediate electron acceptor for the enzyme in this species is believed to be plastoquinone. Couples the redox reaction to proton translocation, and thus conserves the redox energy in a proton gradient. The chain is NAD(P)H-quinone oxidoreductase subunit 2 B, chloroplastic from Chloranthus spicatus (Chulantree).